Consider the following 392-residue polypeptide: Probable tRNA sulfurtransferase (392 aa).

Positions 60–162 (QQVINDLQQV…HDCAIVYGHK (103 aa)) constitute a THUMP domain. Residues 180-181 (LL), 205-206 (TF), R264, G286, and Q295 contribute to the ATP site.

It belongs to the ThiI family.

It is found in the cytoplasm. It catalyses the reaction [ThiI sulfur-carrier protein]-S-sulfanyl-L-cysteine + a uridine in tRNA + 2 reduced [2Fe-2S]-[ferredoxin] + ATP + H(+) = [ThiI sulfur-carrier protein]-L-cysteine + a 4-thiouridine in tRNA + 2 oxidized [2Fe-2S]-[ferredoxin] + AMP + diphosphate. The catalysed reaction is [ThiS sulfur-carrier protein]-C-terminal Gly-Gly-AMP + S-sulfanyl-L-cysteinyl-[cysteine desulfurase] + AH2 = [ThiS sulfur-carrier protein]-C-terminal-Gly-aminoethanethioate + L-cysteinyl-[cysteine desulfurase] + A + AMP + 2 H(+). It functions in the pathway cofactor biosynthesis; thiamine diphosphate biosynthesis. In terms of biological role, catalyzes the ATP-dependent transfer of a sulfur to tRNA to produce 4-thiouridine in position 8 of tRNAs, which functions as a near-UV photosensor. Also catalyzes the transfer of sulfur to the sulfur carrier protein ThiS, forming ThiS-thiocarboxylate. This is a step in the synthesis of thiazole, in the thiamine biosynthesis pathway. The sulfur is donated as persulfide by IscS. This chain is Probable tRNA sulfurtransferase, found in Ureaplasma urealyticum serovar 10 (strain ATCC 33699 / Western).